An 88-amino-acid polypeptide reads, in one-letter code: Phage-like element PBSX protein XkdR (88 aa).

It to B.subtilis YqbR.

The chain is Phage-like element PBSX protein XkdR (xkdR) from Bacillus subtilis (strain 168).